We begin with the raw amino-acid sequence, 215 residues long: Orotate phosphoribosyltransferase (215 aa).

K26 serves as a coordination point for 5-phospho-alpha-D-ribose 1-diphosphate. 34–35 (FF) lines the orotate pocket. 5-phospho-alpha-D-ribose 1-diphosphate-binding positions include 72–73 (YK), R99, K100, K103, H105, and 124–132 (DDVITAGTA). Residues T128 and R156 each contribute to the orotate site.

This sequence belongs to the purine/pyrimidine phosphoribosyltransferase family. PyrE subfamily. Homodimer. It depends on Mg(2+) as a cofactor.

The enzyme catalyses orotidine 5'-phosphate + diphosphate = orotate + 5-phospho-alpha-D-ribose 1-diphosphate. It participates in pyrimidine metabolism; UMP biosynthesis via de novo pathway; UMP from orotate: step 1/2. Catalyzes the transfer of a ribosyl phosphate group from 5-phosphoribose 1-diphosphate to orotate, leading to the formation of orotidine monophosphate (OMP). This chain is Orotate phosphoribosyltransferase, found in Stutzerimonas stutzeri (strain A1501) (Pseudomonas stutzeri).